We begin with the raw amino-acid sequence, 2109 residues long: Nonribosomal peptide synthetase sidE (2109 aa).

An adenylation 1 region spans residues 31 to 512 (LTPPSPPCLV…QNGKVDFRAI (482 aa)). The region spanning 537-613 (AGLSETASKI…EIADTVQLDS (77 aa)) is the Carrier 1 domain. Ser-574 is subject to O-(pantetheine 4'-phosphoryl)serine. The interval 646–908 (DAYPVTALQE…LAVVPYAIAI (263 aa)) is condensation 1. The segment at 1058-1555 (RTLNGQFEAT…GKANRKQLKA (498 aa)) is adenylation 2. Residues 1584–1660 (PLASETQKVL…AMADQLKGES (77 aa)) enclose the Carrier 2 domain. Ser-1621 carries the post-translational modification O-(pantetheine 4'-phosphoryl)serine. The tract at residues 1695-1968 (YPCPPGQAEF…NFLPMRSKVD (274 aa)) is condensation 2.

Belongs to the NRP synthetase family.

It participates in siderophore biosynthesis. Functionally, nonribosomal peptide synthetase; part of the siderophore biosynthetic pathway. Aspergillus fumigatus produces four types of siderophores, low-molecular-mass iron chelators, including excreted fusarinine C (FsC) and triacetylfusarinine C (TAFC) for iron uptake and intacellular ferricrocin (FC) for hyphal and hydroxyferricrocin (HFC) for conidial iron distribution and storage. TAFC consists of three N(2)-acetyl-N(5)-anhydromevalonyl-N(5)-hydroxyornithine residues cyclically linked by ester bonds; FC is a cyclic hexapeptide with the structure Gly-Ser-Gly-(N(5)-acetyl-N(5)-hydroxyornithine)x3. The biosynthesis of all four siderophores depends on the hydroxylation of ornithine, catalyzed by the monooxygenase sidA. Subsequently, the pathways for biosynthesis of extra- and intracellular siderophores split. For biosynthesis of extracellular siderophores, the transacylase sidF transfers anhydromevalonyl to N(5)-hydroxyornithine. The required anhydromevalonyl-CoA moiety is derived from mevalonate by CoA ligation and dehydration catalyzed by sidI and sidH respectively. The acetylation of N(5)-hydroxyornithine for FC biosynthesis involves the constitutively expressed sidL. FC is hydroxylated to HFC by an as yet uncharacterized enzyme during conidiation. Assembly of fusarinine C (FsC) and FC is catalyzed by two different nonribosomal peptide synthetases (NRPS), sidD and sidC respectively. Subsequently, sidG catalyzes N2-acetylation of FsC for forming TAFC. Both extra- and intracellular siderophores are crucial for growth during iron limitation and virulence. This Aspergillus fumigatus (strain ATCC MYA-4609 / CBS 101355 / FGSC A1100 / Af293) (Neosartorya fumigata) protein is Nonribosomal peptide synthetase sidE.